A 2375-amino-acid chain; its full sequence is MVALSLKICVRHCNVVKTMQFEPSTAVYDACRVIRERVPEAQTGQASDYGLFLSDEDPRKGIWLEAGRTLDYYMLRNGDILEYKKKQRPQKIRMLDGSVKTVMVDDSKTVGELLVTICSRIGITNYEEYSLIQETIEEKKEEGTGTLKKDRTLLRDERKMEKLKAKLHTDDDLNWLDHSRTFREQGVDENETLLLRRKFFYSDQNVDSRDPVQLNLLYVQARDDILNGSHPVSFEKACEFGGFQAQIQFGPHVEHKHKPGFLDLKEFLPKEYIKQRGAEKRIFQEHKNCGEMSEIEAKVKYVKLARSLRTYGVSFFLVKEKMKGKNKLVPRLLGITKDSVMRVDEKTKEVLQEWPLTTVKRWAASPKSFTLDFGEYQESYYSVQTTEGEQISQLIAGYIDIILKKKQSKDRFGLEGDEESTMLEESVSPKKRSTILQQQFNRTGKAEHGSVALPAVMRSGSSGPETFNVGSMPSPQQQVMVGQMHRGHMPPLTSAQQALMGTINTSMHAVQQAQDDLSELDSLPPLGQDMASRVWVQNKVDESKHEIHSQVDAITAGTASVVNLTAGDPADTDYTAVGCAITTISSNLTEMSKGVKLLAALMDDDVGSGEDLLRAARTLAGAVSDLLKAVQPTSGEPRQTVLTAAGSIGQASGDLLRQIGENETDERFQDVLMSLAKAVANAAAMLVLKAKNVAQVAEDTVLQNRVIAAATQCALSTSQLVACAKVVSPTISSPVCQEQLIEAGKLVDRSVENCVRACQAATSDSELLKQVSAAASVVSQALHDLLQHVRQFASRGEPIGRYDQATDTIMCVTESIFSSMGDAGEMVRQARVLAQATSDLVNAMRSDAEAEIDMENSKKLLAAAKLLADSTARMVEAAKGAAANPENEDQQQRLREAAEGLRVATNAAAQNAIKKKIVNRLEVAAKQAAAAATQTIAASQNAAISNKNPSAQQQLVQSCKAVADHIPQLVQGVRGSQAQAEDLSAQLALIISSQNFLQPGSKMVSSAKAAVPTVSDQAAAMQLSQCAKNLATSLAELRTASQKAHEACGPMEIDSALNTVQTLKNELQDAKMAAAESQLKPLPGETLEKCAQDLGSTSKGVGSSMAQLLTCAAQGNEHYTGVAARETAQALKTLAQAARGVAASTNDPEAAHAMLDSARDVMEGSAMLIQEAKQALIAPGDTESQQRLAQVAKAVSHSLNNCVNCLPGQKDVDVALKSIGEASKKLLVDSLPPSTKPFQEAQSELNQAAADLNQSAGEVVHATRGQSGELAAASGKFSDDFDEFLDAGIEMAGQAQTKEDQMQVIGNLKNISMASSKLLLAAKSLSVDPGAPNAKNLLAAAARAVTESINQLIMLCTQQAPGQKECDNALRELETVKGMLENPNEPVSDLSYFDCIESVMENSKVLGESMAGISQNAKTGDLPAFGECVGIASKALCGLTEAAAQAAYLVGISDPNSQAGHQGLVDPIQFARANQAIQMACQNLVDPGSSPSQVLSAATIVAKHTSALCNACRIASSKTANPVAKRHFVQSAKEVANSTANLVKTIKALDGDFSEDNRNKCRIATTPLIEAVENLTAFASNPEFASIPAQISSEGSQAQEPILVSAKTMLESSSYLIRTARSLAINPKDPPTWSVLAGHSHTVSDSIKSLITSIRDKAPGQRECDYSIDGINRCIRDIEQASLAAVSQSLATRDDISVEALQEQLTSVVQEIGHLIDPIATAARGEAAQLGHKVTQLASYFEPLILAAVGVASKMLDHQQQMTVLDQTKTLAESALQMLYAAKEGGGNPKAVHTAPEPKGTFVDYQTTVVKYSKAIAVTAQEMIGFQIRTRVQDLGHGCIFLVQKAGALQVCPTDSYTKRELIECARSVTEKVSLVLSALQAGNKGTQACITAATAVSGIIADLDTTIMFATAGTLNAENGETFADHRENILKTAKALVEDTKLLVSGAASTPDKLAQAAQSSAATITQLAEVVKLGAASLGSNDPETQVVLINAIKDVAKALSDLIGATKGAASKPADDPSMYQLKGAAKVMVTNVTSLLKTVKAVEDEATRGTRALEATIEYIKQELTVFQSKDIPEKTSSPEESIRMTKGITMATAKAVAAGNSCRQEDVIATANLSRKAVSDMLIACKQASFYPDVSEEVRTRALRYGTECTLGYLDLLEHVLVILQKPTPELKHQLAAFSKRVAGAVTELIQAAEAMKGTEWVDPEDPTVIAETELLGAAASIEAAAKKLEQLKPRAKPKQADETLDFEEQILEAAKSIAAATSALVKSASAAQRELVAQGKVGSIPANAADDGQWSQGLISAARMVAAATSSLCEAANASVQGHASEEKLISSAKQVAASTAQLLVACKVKADQDSEAMKRLQAAGNAV.

The region spanning 88 to 406 is the FERM domain; sequence RPQKIRMLDG…GYIDIILKKK (319 aa). Positions 312-406 are interaction with PIP5K1C; that stretch reads GVSFFLVKEK…GYIDIILKKK (95 aa). Phosphoserine occurs at positions 428, 450, 624, and 1024. Tyr1666 bears the Phosphotyrosine mark. One can recognise an I/LWEQ domain in the interval 2205–2375; the sequence is TEWVDPEDPT…KRLQAAGNAV (171 aa).

Interacts directly with PIP5K1C.

The protein resides in the cytoplasm. The protein localises to the cell junction. Its subcellular location is the focal adhesion. It is found in the synapse. It localises to the cell membrane. The protein resides in the cytoskeleton. Its function is as follows. As a major component of focal adhesion plaques that links integrin to the actin cytoskeleton, may play an important role in cell adhesion. Recruits PIP5K1C to focal adhesion plaques and strongly activates its kinase activity. The protein is Talin-2 (Tln2) of Mus musculus (Mouse).